The chain runs to 64 residues: Translation machinery-associated protein 7 homolog (64 aa).

The interval 1–64 is disordered; it reads MSGRQGGKAK…GGGIKKSGKK (64 aa). A coiled-coil region spans residues 21-50; sequence DLSEEDVEFKKKQQEEAKKIKEMAAKAGQR. Over residues 28 to 44 the composition is skewed to basic and acidic residues; the sequence is EFKKKQQEEAKKIKEMA. The span at 53 to 64 shows a compositional bias: gly residues; it reads LLGGGIKKSGKK.

Belongs to the TMA7 family.

This chain is Translation machinery-associated protein 7 homolog, found in Caenorhabditis briggsae.